Reading from the N-terminus, the 188-residue chain is Threonylcarbamoyl-AMP synthase (188 aa).

Residues 3–188 (QLHPSEIKDI…RSGKILRNGQ (186 aa)) form the YrdC-like domain.

The protein belongs to the SUA5 family. TsaC subfamily.

It localises to the cytoplasm. The enzyme catalyses L-threonine + hydrogencarbonate + ATP = L-threonylcarbamoyladenylate + diphosphate + H2O. Required for the formation of a threonylcarbamoyl group on adenosine at position 37 (t(6)A37) in tRNAs that read codons beginning with adenine. Catalyzes the conversion of L-threonine, HCO(3)(-)/CO(2) and ATP to give threonylcarbamoyl-AMP (TC-AMP) as the acyladenylate intermediate, with the release of diphosphate. The polypeptide is Threonylcarbamoyl-AMP synthase (Shewanella sp. (strain MR-4)).